Consider the following 354-residue polypeptide: Protein YGP1 (354 aa).

An N-terminal signal peptide occupies residues 1-19 (MKFQVVLSALLACSSAVVA). Residues 20 to 37 (SPIENLFKYRAVKASHSK) constitute a propeptide that is removed on maturation. N-linked (GlcNAc...) asparagine glycans are attached at residues Asn40, Asn50, Asn53, Asn58, Asn61, Asn65, Asn87, Asn94, Asn100, Asn106, Asn118, Asn172, Asn239, and Asn286. One can recognise an Asparaginase/glutaminase domain in the interval 50 to 354 (NSSNVTYANG…SKSALESIFP (305 aa)).

To yeast sporulation-specific protein SPS100. In terms of processing, extensively N-glycosylated.

It localises to the secreted. Functionally, may be involved in cellular adaptations prior to stationary phase. The chain is Protein YGP1 (YGP1) from Saccharomyces cerevisiae (strain ATCC 204508 / S288c) (Baker's yeast).